The sequence spans 51 residues: Insulin (51 aa).

3 cysteine pairs are disulfide-bonded: C7/C37, C19/C50, and C36/C41.

Belongs to the insulin family. As to quaternary structure, heterodimer of a B chain and an A chain linked by two disulfide bonds.

The protein localises to the secreted. Functionally, insulin decreases blood glucose concentration. It increases cell permeability to monosaccharides, amino acids and fatty acids. It accelerates glycolysis, the pentose phosphate cycle, and glycogen synthesis in liver. The protein is Insulin (INS) of Alligator mississippiensis (American alligator).